A 758-amino-acid polypeptide reads, in one-letter code: 5-methyltetrahydropteroyltriglutamate--homocysteine methyltransferase (758 aa).

5-methyltetrahydropteroyltri-L-glutamate contacts are provided by residues 16–19 (RELK) and Lys-112. L-homocysteine contacts are provided by residues 433–435 (IGS) and Glu-486. Residues 433-435 (IGS) and Glu-486 contribute to the L-methionine site. Residues 517-518 (RC) and Trp-563 each bind 5-methyltetrahydropteroyltri-L-glutamate. Asp-601 contributes to the L-homocysteine binding site. Residue Asp-601 coordinates L-methionine. Glu-607 contributes to the 5-methyltetrahydropteroyltri-L-glutamate binding site. Zn(2+) contacts are provided by His-643, Cys-645, and Glu-667. Catalysis depends on His-696, which acts as the Proton donor. Residue Cys-728 participates in Zn(2+) binding.

This sequence belongs to the vitamin-B12 independent methionine synthase family. Zn(2+) is required as a cofactor.

It catalyses the reaction 5-methyltetrahydropteroyltri-L-glutamate + L-homocysteine = tetrahydropteroyltri-L-glutamate + L-methionine. The protein operates within amino-acid biosynthesis; L-methionine biosynthesis via de novo pathway; L-methionine from L-homocysteine (MetE route): step 1/1. Its function is as follows. Catalyzes the transfer of a methyl group from 5-methyltetrahydrofolate to homocysteine resulting in methionine formation. In Neisseria meningitidis serogroup A / serotype 4A (strain DSM 15465 / Z2491), this protein is 5-methyltetrahydropteroyltriglutamate--homocysteine methyltransferase.